We begin with the raw amino-acid sequence, 338 residues long: tRNA pseudouridine synthase D (338 aa).

The active-site Nucleophile is aspartate 79. The TRUD domain maps to 154–303 (GVPNYFGEQR…EEAWRANILY (150 aa)).

It belongs to the pseudouridine synthase TruD family.

The enzyme catalyses uridine(13) in tRNA = pseudouridine(13) in tRNA. Responsible for synthesis of pseudouridine from uracil-13 in transfer RNAs. The protein is tRNA pseudouridine synthase D of Legionella pneumophila (strain Lens).